Reading from the N-terminus, the 955-residue chain is Kinesin-like protein KIN-14L (955 aa).

The Calponin-homology (CH) domain maps to 19-140 (AARRFQAVQW…CILGLKAYHE (122 aa)). A Kinesin motor domain is found at 363-685 (NIRVYCRVRP…LKFAQRVSTV (323 aa)). Residue 445-452 (GQTGSGKT) participates in ATP binding. Residues 692–719 (AHKETREVMHLKEQIENLKRALGTEEWN) are a coiled coil. The segment at 878-942 (RKENIPADPR…GKPIENGKKD (65 aa)) is disordered. Residues 894–916 (NNFSHIKSPDTSNAKTMRRQSLT) show a composition bias toward polar residues.

The protein belongs to the TRAFAC class myosin-kinesin ATPase superfamily. Kinesin family. KIN-14 subfamily.

The chain is Kinesin-like protein KIN-14L from Arabidopsis thaliana (Mouse-ear cress).